Consider the following 87-residue polypeptide: Large ribosomal subunit protein bL27 (87 aa).

The tract at residues 1-21 (MAHKKAGGSSRNGRDSESKRL) is disordered.

It belongs to the bacterial ribosomal protein bL27 family.

This Aromatoleum aromaticum (strain DSM 19018 / LMG 30748 / EbN1) (Azoarcus sp. (strain EbN1)) protein is Large ribosomal subunit protein bL27.